The chain runs to 464 residues: ATP synthase subunit beta (464 aa).

148–155 (GGAGVGKT) contacts ATP.

It belongs to the ATPase alpha/beta chains family. In terms of assembly, F-type ATPases have 2 components, CF(1) - the catalytic core - and CF(0) - the membrane proton channel. CF(1) has five subunits: alpha(3), beta(3), gamma(1), delta(1), epsilon(1). CF(0) has three main subunits: a(1), b(2) and c(9-12). The alpha and beta chains form an alternating ring which encloses part of the gamma chain. CF(1) is attached to CF(0) by a central stalk formed by the gamma and epsilon chains, while a peripheral stalk is formed by the delta and b chains.

It is found in the cell inner membrane. It catalyses the reaction ATP + H2O + 4 H(+)(in) = ADP + phosphate + 5 H(+)(out). Functionally, produces ATP from ADP in the presence of a proton gradient across the membrane. The catalytic sites are hosted primarily by the beta subunits. This chain is ATP synthase subunit beta, found in Acinetobacter baylyi (strain ATCC 33305 / BD413 / ADP1).